Here is a 406-residue protein sequence, read N- to C-terminus: Testis-specific Y-encoded-like protein 5 (406 aa).

A compositionally biased stretch (basic residues) spans 1 to 25 (MSGRSRGRKSSRAKGRGKGRARARV). Disordered regions lie at residues 1 to 67 (MSGR…PAEL), 132 to 164 (IGNR…PKMA), and 382 to 406 (RGEK…RQPN). Basic and acidic residues predominate over residues 27–38 (AAAEDAWHDEKP). Residues 49 to 62 (AAAQVQAGAAQGGA) are compositionally biased toward low complexity. The segment covering 382–392 (RGEKGKEERPG) has biased composition (basic and acidic residues).

It belongs to the nucleosome assembly protein (NAP) family. In terms of assembly, interacts with USP7.

In terms of biological role, involved in modulation of cell growth and cellular response to gamma radiation probably via regulation of the Akt signaling pathway. Involved in regulation of p53/TP53. Suppresses p53/TP53 protein levels and promotes its ubiquitination; the function is dependent on USP7 and independent on MDM2. Proposed to displace p53/TP53 from interaction with USP7. The sequence is that of Testis-specific Y-encoded-like protein 5 (Tspyl5) from Mus musculus (Mouse).